A 443-amino-acid polypeptide reads, in one-letter code: Xaa-Pro dipeptidase (443 aa).

Positions 246, 257, 339, 384, and 423 each coordinate Mn(2+).

Belongs to the peptidase M24B family. Bacterial-type prolidase subfamily. The cofactor is Mn(2+).

The enzyme catalyses Xaa-L-Pro dipeptide + H2O = an L-alpha-amino acid + L-proline. In terms of biological role, splits dipeptides with a prolyl residue in the C-terminal position. In Escherichia coli O81 (strain ED1a), this protein is Xaa-Pro dipeptidase.